A 319-amino-acid polypeptide reads, in one-letter code: Iron-sulfur cluster transfer protein NUBPL (319 aa).

Residues 1–38 (MGTWRRLLLFGGVSLRGGGAATVPPRGCRALGCGRQLL) constitute a mitochondrion transit peptide. Residue 75–82 (GKGGVGKS) coordinates ATP.

The protein belongs to the Mrp/NBP35 ATP-binding proteins family. The cofactor is [4Fe-4S] cluster.

Its subcellular location is the mitochondrion. Its function is as follows. Iron-sulfur cluster transfer protein involved in the assembly of the mitochondrial membrane respiratory chain NADH dehydrogenase (Complex I). May deliver one or more Fe-S clusters to complex I subunits. In Mus musculus (Mouse), this protein is Iron-sulfur cluster transfer protein NUBPL (Nubpl).